Consider the following 435-residue polypeptide: MIDQNLLRTNLDDVANALKVKRGFTLDVESVKALEEKRKALQVKTETLQAERNARSKNIGAAKARGEDISALLAEVDNMGNELNEAKVALDQVQAEIRELLLSVPNLPADEVPLGKDDTENLEVSRWGEPRQFDFEVKDHVALGEALNGLDFAAGVKLTASRFVVMKGKLARLHRALSQFMLDLHTEQHGYVETNVPFLVNHDTLFGTGQLPKFGEDLFHTQPLTGQDPNETQRPFSLIPTAEVPVTNLVRDEIIDEDSLPLRYTAHTPCFRSEAGSYGRDTRGLIRMHQFEKVEMVQIVAPEKSMEALEELTGHAEKVLQLLGLPYRKVLLCTGDMGFGSAKTYDLEVWLPAQNTYREISSCSNMWDFQARRMSARCKAKGDKKTRLVHTLNGSGLAVGRTLVAVLENYQNADGSITVPEVLRPYMGGVEVITA.

Thr-241 to Glu-243 provides a ligand contact to L-serine. Arg-272–Glu-274 is an ATP binding site. Glu-295 provides a ligand contact to L-serine. Glu-359–Ser-362 serves as a coordination point for ATP. Ser-395 serves as a coordination point for L-serine.

It belongs to the class-II aminoacyl-tRNA synthetase family. Type-1 seryl-tRNA synthetase subfamily. As to quaternary structure, homodimer. The tRNA molecule binds across the dimer.

The protein resides in the cytoplasm. It catalyses the reaction tRNA(Ser) + L-serine + ATP = L-seryl-tRNA(Ser) + AMP + diphosphate + H(+). The enzyme catalyses tRNA(Sec) + L-serine + ATP = L-seryl-tRNA(Sec) + AMP + diphosphate + H(+). It functions in the pathway aminoacyl-tRNA biosynthesis; selenocysteinyl-tRNA(Sec) biosynthesis; L-seryl-tRNA(Sec) from L-serine and tRNA(Sec): step 1/1. Functionally, catalyzes the attachment of serine to tRNA(Ser). Is also able to aminoacylate tRNA(Sec) with serine, to form the misacylated tRNA L-seryl-tRNA(Sec), which will be further converted into selenocysteinyl-tRNA(Sec). This is Serine--tRNA ligase from Actinobacillus pleuropneumoniae serotype 7 (strain AP76).